We begin with the raw amino-acid sequence, 612 residues long: UvrABC system protein C (612 aa).

A GIY-YIG domain is found at 15–93 (HLPGVYRMYD…IKQHQPKYNV (79 aa)). Residues 203-238 (SQVIDYLMQKMEIAASELDFETAARFRDQIQSVRAV) enclose the UVR domain.

This sequence belongs to the UvrC family. As to quaternary structure, interacts with UvrB in an incision complex.

The protein localises to the cytoplasm. The UvrABC repair system catalyzes the recognition and processing of DNA lesions. UvrC both incises the 5' and 3' sides of the lesion. The N-terminal half is responsible for the 3' incision and the C-terminal half is responsible for the 5' incision. This Haemophilus ducreyi (strain 35000HP / ATCC 700724) protein is UvrABC system protein C.